We begin with the raw amino-acid sequence, 291 residues long: Elongation factor Ts (291 aa).

The tract at residues 79 to 82 is involved in Mg(2+) ion dislocation from EF-Tu; sequence TDFV.

It belongs to the EF-Ts family.

It localises to the cytoplasm. Associates with the EF-Tu.GDP complex and induces the exchange of GDP to GTP. It remains bound to the aminoacyl-tRNA.EF-Tu.GTP complex up to the GTP hydrolysis stage on the ribosome. In Ruegeria sp. (strain TM1040) (Silicibacter sp.), this protein is Elongation factor Ts.